Consider the following 429-residue polypeptide: Ribosomal RNA small subunit methyltransferase B (429 aa).

S-adenosyl-L-methionine is bound by residues 254–260, Asp-277, Asp-303, and Asp-322; that span reads CAAPGGK. Catalysis depends on Cys-375, which acts as the Nucleophile.

Belongs to the class I-like SAM-binding methyltransferase superfamily. RsmB/NOP family.

It is found in the cytoplasm. The catalysed reaction is cytidine(967) in 16S rRNA + S-adenosyl-L-methionine = 5-methylcytidine(967) in 16S rRNA + S-adenosyl-L-homocysteine + H(+). In terms of biological role, specifically methylates the cytosine at position 967 (m5C967) of 16S rRNA. The polypeptide is Ribosomal RNA small subunit methyltransferase B (Pectobacterium carotovorum subsp. carotovorum (strain PC1)).